The sequence spans 193 residues: Probable GTP-binding protein EngB (193 aa).

The 170-residue stretch at N24–L193 folds into the EngB-type G domain. GTP is bound by residues G32–S39, G59–T63, D77–G80, T144–D147, and F174–A176. 2 residues coordinate Mg(2+): S39 and T61.

The protein belongs to the TRAFAC class TrmE-Era-EngA-EngB-Septin-like GTPase superfamily. EngB GTPase family. It depends on Mg(2+) as a cofactor.

Its function is as follows. Necessary for normal cell division and for the maintenance of normal septation. The chain is Probable GTP-binding protein EngB from Syntrophomonas wolfei subsp. wolfei (strain DSM 2245B / Goettingen).